The sequence spans 460 residues: Lysosomal proton-coupled steroid conjugate and bile acid symporter SLC46A3 (460 aa).

Residues 1 to 25 (MKISFIEPAILLNAFAMTLTIPLTA) form the signal peptide. The Extracellular portion of the chain corresponds to 26–73 (QYVYRRIWEETGNYTFASNSNGSECDQNKSSSIFAFREEVQKKASLFN). N-linked (GlcNAc...) asparagine glycosylation is found at Asn38, Asn46, and Asn53. The helical transmembrane segment at 74–94 (LQVEMSALIPGLVSTFMLLAS) threads the bilayer. Topologically, residues 95–111 (SDNHGRKLPMVLSSLGS) are cytoplasmic. A helical membrane pass occupies residues 112-132 (LGTNTWLCMMSYFDLPLQLLI). The Extracellular portion of the chain corresponds to 133 to 135 (AST). The helical transmembrane segment at 136–156 (FIGALFGNYTTFWGACFAYIV) threads the bilayer. Residues 157-170 (DQQKEYKHRIIRIA) lie on the Cytoplasmic side of the membrane. A helical membrane pass occupies residues 171–191 (ILDFMLGVVTGLTGLSSGYFI). Over 192-195 (RELG) the chain is Extracellular. A helical transmembrane segment spans residues 196–216 (FVWSYFITAMVLIVNLAYILF). Topologically, residues 217 to 257 (FLNDPIKESSSQIVTMSCIESLKDLFYRTYMLFKNGSSKRQ) are cytoplasmic. The helical transmembrane segment at 258 to 278 (ALLCLLIFTLVIYFFVIIGIS) threads the bilayer. The Extracellular portion of the chain corresponds to 279 to 301 (PIFTLYELGPPLCWNEVYIGYGS). Residues 302 to 322 (ALGSVSFLSSFLGIWLFSYCL) traverse the membrane as a helical segment. Over 323–324 (KD) the chain is Cytoplasmic. The chain crosses the membrane as a helical span at residues 325 to 345 (IHIAYIGIFTTMVGMTLAAFT). At 346–347 (RT) the chain is on the extracellular side. The chain crosses the membrane as a helical span at residues 348-368 (TLMMFLVRIPFIFTIMPLSVL). Over 369–381 (RSMLSKVVHSTEQ) the chain is Cytoplasmic. The helical transmembrane segment at 382–402 (GALFACIAFLETLAGVTSTSA) threads the bilayer. Topologically, residues 403-410 (YSGIYSAT) are extracellular. A helical transmembrane segment spans residues 411 to 431 (VAWYPGFIFLLSAGLLVLPAI). At 432–460 (SLCCVKSIGWEEGSYTLLVHEEPSEHTSD) the chain is on the cytoplasmic side. A Tyrosine-based lysosomal-sorting motif motif is present at residues 446–449 (YTLL).

Belongs to the major facilitator superfamily. SLC46A family. Expressed in liver, kidney, small intestine and colon.

It localises to the lysosome membrane. It catalyses the reaction estrone 3-sulfate(out) + n H(+)(out) = estrone 3-sulfate(in) + n H(+)(in). It carries out the reaction 25-hydroxyvitamin D3 sulfate(out) + n H(+)(out) = 25-hydroxyvitamin D3 sulfate(in) + n H(+)(in). The catalysed reaction is cholate(out) + n H(+)(out) = cholate(in) + n H(+)(in). The enzyme catalyses glycocholate(out) + n H(+)(out) = glycocholate(in) + n H(+)(in). It catalyses the reaction taurocholate(out) + n H(+)(out) = taurocholate(in) + n H(+)(in). It carries out the reaction dehydroepiandrosterone 3-sulfate(out) + n H(+)(out) = dehydroepiandrosterone 3-sulfate(in) + n H(+)(in). The catalysed reaction is N-acetyl-D-muramoyl-L-alanyl-D-isoglutamine(out) + n H(+)(out) = N-acetyl-D-muramoyl-L-alanyl-D-isoglutamine(in) + n H(+)(in). The enzyme catalyses 2',3'-cGAMP(out) + n H(+)(out) = 2',3'-cGAMP(in) + n H(+)(in). Functionally, lysosomal proton-coupled steroid conjugate and bile acid transporter. Preferentially recognizes lipophilic steroid conjugates or bile acis as endogenous substrates and seems to mediate escape from lysosomes to the cytoplasm. Modulates hepatic cytosolic copper homeostasis, maybe acting as a lysosomal copper transporter and sequestering copper ions in the lysosome. Delivers pathogen-associated molecular patterns to cytosolic pattern recognition receptors as part of the innate immune response to microbes. Selectively transports bacterial muramyl dipeptide (MDP) into the cytosol for recognition by NOD2, triggering inflammatory responses. Likely acts as a redundant importer of cyclic GMP-AMP dinucleotides (cGAMPs) in monocyte and macrophage cell lineages. The transport mechanism, its electrogenicity and stoichiometry remain to be elucidated. In Mus musculus (Mouse), this protein is Lysosomal proton-coupled steroid conjugate and bile acid symporter SLC46A3 (Slc46a3).